The primary structure comprises 361 residues: Mitochondrial import receptor subunit TOM40 homolog (361 aa).

Positions 1–73 (MGNVLAASSP…GAAAASEDGS (73 aa)) are disordered. Residues 11–36 (PAGPPPPPTPSLVGLPPPPPSPPGFT) are compositionally biased toward pro residues. The span at 40-50 (LGGGLGTGSST) shows a compositional bias: gly residues. The span at 51-69 (GRGSERTPGAAASGAAAAS) shows a compositional bias: low complexity.

This sequence belongs to the Tom40 family. Forms part of the preprotein translocase complex of the outer mitochondrial membrane (TOM complex) which consists of at least 7 different proteins (TOMM5, TOMM6, TOMM7, TOMM20, TOMM22, TOMM40 and TOMM70). Interacts with mitochondrial targeting sequences. Interacts with TIMM29; linking the TIM22 complex to the TOM complex. Forms a complex with BCAP31 (via C-terminus) which mediates the translocation of components of the mitochondrial membrane respiratory chain NADH dehydrogenase (Complex I) from the cytosol to the mitochondria. Interacts (via N-terminus) with CYP1A1 (via mitochondrial targeting signal); this interaction is required for CYP1A1 translocation across the mitochondrial outer membrane.

It is found in the mitochondrion outer membrane. Channel-forming protein essential for import of protein precursors into mitochondria. Plays a role in the assembly of the mitochondrial membrane respiratory chain NADH dehydrogenase (Complex I) by forming a complex with BCAP31 and mediating the translocation of Complex I components from the cytosol to the mitochondria. The protein is Mitochondrial import receptor subunit TOM40 homolog (Tomm40) of Mus musculus (Mouse).